A 365-amino-acid chain; its full sequence is MQYINIVNEGVKQLHPYQAGKPIEELERELGITNIIKLASNENPFGLPDSAKQAILAELDNLTRYPDSNGFYFKQTVAKKFGLSPEQITLGNGSNDLLELVAHTFANEQDEILFSQYAFIVYPLVTQAINAKKVEIPAKNYGADLDGFLQAISDKTKLIYLANPNNPTGTFLSAGEISQFLNQVPAHVIVVLDEAYTEFTLPEERVDSFTLLKKHSNLVICRTLSKAYGLAGLRIGYAVSSAEIADLFNRVRQPFNCNSLALAAATAVLHDDAFIAKVAENNRQGLKLLEDFFTAKGLNYIPSKGNFVMLDVNQPALPIYQALLQKGVIVRPIAGYGLPNHLRISIGLPEENQRFLLALNEVLGL.

The residue at position 226 (K226) is an N6-(pyridoxal phosphate)lysine.

This sequence belongs to the class-II pyridoxal-phosphate-dependent aminotransferase family. Histidinol-phosphate aminotransferase subfamily. As to quaternary structure, homodimer. It depends on pyridoxal 5'-phosphate as a cofactor.

The enzyme catalyses L-histidinol phosphate + 2-oxoglutarate = 3-(imidazol-4-yl)-2-oxopropyl phosphate + L-glutamate. It participates in amino-acid biosynthesis; L-histidine biosynthesis; L-histidine from 5-phospho-alpha-D-ribose 1-diphosphate: step 7/9. This is Histidinol-phosphate aminotransferase 2 (hisC2) from Pasteurella multocida (strain Pm70).